The sequence spans 306 residues: Probable dimethyladenosine transferase (306 aa).

Residues His30, Leu32, Gly57, Glu78, Asp106, and Asn121 each coordinate S-adenosyl-L-methionine.

Belongs to the class I-like SAM-binding methyltransferase superfamily. rRNA adenine N(6)-methyltransferase family. In terms of assembly, part of the small subunit (SSU) processome, composed of more than 70 proteins and the RNA chaperone small nucleolar RNA (snoRNA) U3.

Its subcellular location is the nucleus. It is found in the nucleolus. It catalyses the reaction adenosine(1779)/adenosine(1780) in 18S rRNA + 4 S-adenosyl-L-methionine = N(6)-dimethyladenosine(1779)/N(6)-dimethyladenosine(1780) in 18S rRNA + 4 S-adenosyl-L-homocysteine + 4 H(+). Its function is as follows. Specifically dimethylates two adjacent adenosines in the loop of a conserved hairpin near the 3'-end of 18S rRNA in the 40S particle. Involved in the pre-rRNA processing steps leading to small-subunit rRNA production independently of its RNA-modifying catalytic activity. Part of the small subunit (SSU) processome, first precursor of the small eukaryotic ribosomal subunit. During the assembly of the SSU processome in the nucleolus, many ribosome biogenesis factors, an RNA chaperone and ribosomal proteins associate with the nascent pre-rRNA and work in concert to generate RNA folding, modifications, rearrangements and cleavage as well as targeted degradation of pre-ribosomal RNA by the RNA exosome. This Drosophila melanogaster (Fruit fly) protein is Probable dimethyladenosine transferase.